The chain runs to 305 residues: Superkiller complex protein 8 (305 aa).

Met-1 is subject to N-acetylmethionine. An N-acetylthreonine; in WD repeat-containing protein 61, N-terminally processed modification is found at Thr-2. 7 WD repeats span residues Ala-14 to Gln-57, Gly-62 to Ser-101, Ala-104 to Ser-143, Thr-146 to Glu-187, Gly-188 to Thr-227, Gly-230 to Thr-269, and Asp-272 to Ile-305.

It belongs to the SKI8 family. Component of the PAF1 complex, which consists of CDC73, PAF1, LEO1, CTR9, RTF1 and SKIC8. The PAF1 complex interacts with PHF5A. Within the PAF1 complex interacts directly with PHF5A. Component of the SKI complex which consists of SKIC2, SKIC3 and SKIC8.

Its subcellular location is the nucleus. It localises to the cytoplasm. Functionally, component of the PAF1 complex (PAF1C) which has multiple functions during transcription by RNA polymerase II and is implicated in regulation of development and maintenance of embryonic stem cell pluripotency. PAF1C associates with RNA polymerase II through interaction with POLR2A CTD non-phosphorylated and 'Ser-2'- and 'Ser-5'-phosphorylated forms and is involved in transcriptional elongation, acting both independently and synergistically with TCEA1 and in cooperation with the DSIF complex and HTATSF1. PAF1C is required for transcription of Hox and Wnt target genes. PAF1C is involved in hematopoiesis and stimulates transcriptional activity of KMT2A/MLL1; it promotes leukemogenesis through association with KMT2A/MLL1-rearranged oncoproteins, such as KMT2A/MLL1-MLLT3/AF9 and KMT2A/MLL1-MLLT1/ENL. PAF1C is involved in histone modifications such as ubiquitination of histone H2B and methylation on histone H3 'Lys-4' (H3K4me3). PAF1C recruits the RNF20/40 E3 ubiquitin-protein ligase complex and the E2 enzyme UBE2A or UBE2B to chromatin which mediate monoubiquitination of 'Lys-120' of histone H2B (H2BK120ub1); UB2A/B-mediated H2B ubiquitination is proposed to be coupled to transcription. PAF1C is involved in mRNA 3' end formation probably through association with cleavage and poly(A) factors. In case of infection by influenza A strain H3N2, PAF1C associates with viral NS1 protein, thereby regulating gene transcription. Required for mono- and trimethylation on histone H3 'Lys-4' (H3K4me3), dimethylation on histone H3 'Lys-79' (H3K4me3). Required for Hox gene transcription. Also acts as a component of the SKI complex, a multiprotein complex that assists the RNA-degrading exosome during the mRNA decay and quality-control pathways. The SKI complex catalyzes mRNA extraction from 80S ribosomal complexes in the 3'-5' direction and channels mRNA to the cytosolic exosome for degradation. SKI-mediated extraction of mRNA from stalled ribosomes allow binding of the Pelota-HBS1L complex and subsequent ribosome disassembly by ABCE1 for ribosome recycling. This Rattus norvegicus (Rat) protein is Superkiller complex protein 8 (Skic8).